The sequence spans 57 residues: Small ribosomal subunit protein eS27 (57 aa).

Positions 10, 13, 29, and 32 each coordinate Zn(2+). The C4-type zinc finger occupies 10 to 32 (CPDCENEQTVFGKASTEVACAVC).

Belongs to the eukaryotic ribosomal protein eS27 family. In terms of assembly, part of the 30S ribosomal subunit. Zn(2+) is required as a cofactor.

In Halobacterium salinarum (strain ATCC 29341 / DSM 671 / R1), this protein is Small ribosomal subunit protein eS27.